We begin with the raw amino-acid sequence, 625 residues long: ATP-dependent RNA helicase mrh4, mitochondrial (625 aa).

The N-terminal 16 residues, 1–16, are a transit peptide targeting the mitochondrion; sequence MWKTARDSVCLICRSA. Over residues 19–28 the composition is skewed to low complexity; the sequence is TTTSTSARAS. The disordered stretch occupies residues 19–119; that stretch reads TTTSTSARAS…DKNTKGQKAL (101 aa). Over residues 90 to 113 the composition is skewed to basic and acidic residues; sequence DPRKAPKPKPVEEDSRRDKRDKNT. The short motif at 144 to 177 is the Q motif element; that stretch reads QAFDQFDLLPVVKEAIAQEALKGMTEIKPTPVQR. The Helicase ATP-binding domain occupies 195 to 406; it reads PKSDNGREEF…EEQFPYINRI (212 aa). Position 208-215 (208-215) interacts with ATP; it reads AETGSGKT. Residues 353–356 carry the DEAD box motif; sequence DEAD. Positions 453 to 625 constitute a Helicase C-terminal domain; the sequence is EGPKSEIDVK…ESMFMGQALV (173 aa).

This sequence belongs to the DEAD box helicase family. MRH4 subfamily.

The protein localises to the mitochondrion. It catalyses the reaction ATP + H2O = ADP + phosphate + H(+). Functionally, ATP-binding RNA helicase involved in mitochondrial RNA metabolism. Required for maintenance of mitochondrial DNA. The polypeptide is ATP-dependent RNA helicase mrh4, mitochondrial (drh-15) (Neurospora crassa (strain ATCC 24698 / 74-OR23-1A / CBS 708.71 / DSM 1257 / FGSC 987)).